The primary structure comprises 443 residues: MISHEHPISIYWNDCSKSEQKKLLTRPINNKLNDIYINVKNILTKVYNEGDRALFKFNFDFDNVQTTQLQIPTEIIMNSGRNLSNEIKQAIHTAMTNITRFHQAQCYSEIIVETLPGVYCQQIIRPLNIVGLYVPGGTAPLLSTVMMLGVPARIAKCKRVILCSPPPIPDVIIYTAQLCGIDEIYQIGGSQSIAAMGFGTESIPKVDKIFGPGNIWVTEAKRQINLAPNGAAIDMLAGPSEILIIADNTANPIFIAADLLSQSEHGPDSHAILITPYSCIAEKTKKELHKQLKILPRNDIVRNVLLNSRMIITNNLMECFSISNSYAPEHLIIQIENASDYLHYITNAGSIFLGNWSPETAGDYASGPNHVLPTYGRAVATSGLGVIDFQKRMSVQQLTQNGLLQLSSTITTLTQIEQLKAHEYAITHRINYIKEQNEHSLLG.

The NAD(+) site is built by Y133, Q191, and N214. Residues S240, Q262, and H265 each contribute to the substrate site. 2 residues coordinate Zn(2+): Q262 and H265. Active-site proton acceptor residues include E329 and H330. H330, D363, E417, and H422 together coordinate substrate. Position 363 (D363) interacts with Zn(2+). H422 contacts Zn(2+).

The protein belongs to the histidinol dehydrogenase family. As to quaternary structure, homodimer. It depends on Zn(2+) as a cofactor.

The catalysed reaction is L-histidinol + 2 NAD(+) + H2O = L-histidine + 2 NADH + 3 H(+). Its pathway is amino-acid biosynthesis; L-histidine biosynthesis; L-histidine from 5-phospho-alpha-D-ribose 1-diphosphate: step 9/9. In terms of biological role, catalyzes the sequential NAD-dependent oxidations of L-histidinol to L-histidinaldehyde and then to L-histidine. This chain is Histidinol dehydrogenase, found in Blochmanniella pennsylvanica (strain BPEN).